The sequence spans 586 residues: DNA-binding protein RFX8 (586 aa).

The RFX-type winged-helix DNA-binding region spans 22–97 (VIQWLVDNFC…YHYDGICIKK (76 aa)).

This sequence belongs to the RFX family.

Its subcellular location is the nucleus. In terms of biological role, may be a transcription factor. The polypeptide is DNA-binding protein RFX8 (RFX8) (Homo sapiens (Human)).